Consider the following 384-residue polypeptide: MKHIAILGSTGSIGKNTLQVARHLKERIKVVAIAARENIDLLEAQSKEFCPDIIAVFNNAKAYELQKRLPGKTVLAGMEGLLAAASYSEADLVISAMTGTMGLQPTIEAIKAGKDVGLANKEALVSGGAIIMKLVKEKNINLLPIDSEHSAIFQCLNGEALKSVQRIILTSSGGPFRTWTQEQLETVTVEQALNHPTWSMGPKVTIDSSTLMNKGLEVIEAFWLFDVSPEQIDVIVHPQSIIHSLVEFCDGSMLAQMSEPNMIVPIQYSLTYPDRAPGLFKPFDFMKNSKLEFFEPNKKTFRCLALAYEALKCGGTLPCYMNAANEVLVERFLKGELSWKNIGIQLEKLMDQHASISVDSLETILAVDALAREEAARSKLISTK.

Residues Thr10, Gly11, Ser12, Ile13, Asn38, and Asn120 each coordinate NADPH. Lys121 contributes to the 1-deoxy-D-xylulose 5-phosphate binding site. Glu122 contacts NADPH. Asp146 is a Mn(2+) binding site. Residues Ser147, Glu148, Ser172, and His195 each contribute to the 1-deoxy-D-xylulose 5-phosphate site. Mn(2+) is bound at residue Glu148. Residue Gly201 participates in NADPH binding. Positions 208, 213, 214, and 217 each coordinate 1-deoxy-D-xylulose 5-phosphate. A Mn(2+)-binding site is contributed by Glu217.

The protein belongs to the DXR family. It depends on Mg(2+) as a cofactor. Mn(2+) serves as cofactor.

The enzyme catalyses 2-C-methyl-D-erythritol 4-phosphate + NADP(+) = 1-deoxy-D-xylulose 5-phosphate + NADPH + H(+). It participates in isoprenoid biosynthesis; isopentenyl diphosphate biosynthesis via DXP pathway; isopentenyl diphosphate from 1-deoxy-D-xylulose 5-phosphate: step 1/6. In terms of biological role, catalyzes the NADPH-dependent rearrangement and reduction of 1-deoxy-D-xylulose-5-phosphate (DXP) to 2-C-methyl-D-erythritol 4-phosphate (MEP). This is 1-deoxy-D-xylulose 5-phosphate reductoisomerase from Protochlamydia amoebophila (strain UWE25).